A 288-amino-acid polypeptide reads, in one-letter code: Fatty acid-binding protein TM_1468 (288 aa).

The DegV domain maps to 3-283 (VKILVDSTAD…PGTVGFGIEV (281 aa)). 2 residues coordinate hexadecanoate: threonine 63 and serine 96.

As to quaternary structure, monomer.

In terms of biological role, binds long-chain fatty acids, such as palmitate, and may play a role in lipid transport or fatty acid metabolism. This Thermotoga maritima (strain ATCC 43589 / DSM 3109 / JCM 10099 / NBRC 100826 / MSB8) protein is Fatty acid-binding protein TM_1468.